The sequence spans 230 residues: 6-carboxyhexanoate--CoA ligase (230 aa).

It belongs to the BioW family. As to quaternary structure, homodimer. Requires Mg(2+) as cofactor.

It catalyses the reaction heptanedioate + ATP + CoA = 6-carboxyhexanoyl-CoA + AMP + diphosphate. Its pathway is metabolic intermediate metabolism; pimeloyl-CoA biosynthesis; pimeloyl-CoA from pimelate: step 1/1. Functionally, catalyzes the transformation of pimelate into pimeloyl-CoA with concomitant hydrolysis of ATP to AMP. In Staphylococcus aureus (strain MRSA252), this protein is 6-carboxyhexanoate--CoA ligase.